An 832-amino-acid polypeptide reads, in one-letter code: Protein P (832 aa).

The segment at 1 to 177 (MPLSCPHFRK…FCGSPYSWEQ (177 aa)) is terminal protein domain (TP). Positions 178–335 (ELQHGAEPVC…YCLSHLVNLL (158 aa)) are spacer. Low complexity predominate over residues 208–224 (KQSRLGLQSQQRQLARS). Residues 208-241 (KQSRLGLQSQQRQLARSHQGRSGSIRARVHSTTR) form a disordered region. The segment at 336-679 (EDWGPCTEHG…YLTLYPVARQ (344 aa)) is polymerase/reverse transcriptase domain (RT). A Reverse transcriptase domain is found at 346-589 (EHHIRIPRTP…YSLNFMGYII (244 aa)). Mg(2+) is bound by residues Asp-418, Asp-540, and Asp-541.

This sequence belongs to the hepadnaviridae P protein family.

The enzyme catalyses DNA(n) + a 2'-deoxyribonucleoside 5'-triphosphate = DNA(n+1) + diphosphate. It carries out the reaction Endonucleolytic cleavage to 5'-phosphomonoester.. With respect to regulation, activated by host HSP70 and HSP40 in vitro to be able to bind the epsilon loop of the pgRNA. Because deletion of the RNase H region renders the protein partly chaperone-independent, the chaperones may be needed indirectly to relieve occlusion of the RNA-binding site by this domain. Inhibited by several reverse-transcriptase inhibitors: Lamivudine, Adefovir and Entecavir. Functionally, multifunctional enzyme that converts the viral RNA genome into dsDNA in viral cytoplasmic capsids. This enzyme displays a DNA polymerase activity that can copy either DNA or RNA templates, and a ribonuclease H (RNase H) activity that cleaves the RNA strand of RNA-DNA heteroduplexes in a partially processive 3'- to 5'-endonucleasic mode. Neo-synthesized pregenomic RNA (pgRNA) are encapsidated together with the P protein, and reverse-transcribed inside the nucleocapsid. Initiation of reverse-transcription occurs first by binding the epsilon loop on the pgRNA genome, and is initiated by protein priming, thereby the 5'-end of (-)DNA is covalently linked to P protein. Partial (+)DNA is synthesized from the (-)DNA template and generates the relaxed circular DNA (RC-DNA) genome. After budding and infection, the RC-DNA migrates in the nucleus, and is converted into a plasmid-like covalently closed circular DNA (cccDNA). The activity of P protein does not seem to be necessary for cccDNA generation, and is presumably released from (+)DNA by host nuclear DNA repair machinery. In Gibbon hepatitis B virus subtype ayw3q (isolate Hope) (HBVgbn), this protein is Protein P.